Reading from the N-terminus, the 1043-residue chain is Isoleucine--tRNA ligase (1043 aa).

Residues Pro-46 and His-57 each contribute to the L-isoleucyl-5'-AMP site. A 'HIGH' region motif is present at residues 47-57 (PTANGLPHVGH). Zn(2+)-binding residues include Cys-181 and Cys-184. L-valine-binding residues include His-319 and Asp-328. 6 residues coordinate Zn(2+): Cys-389, Cys-392, Cys-461, Cys-464, Cys-502, and Cys-504. L-isoleucyl-5'-AMP contacts are provided by Glu-550, Gly-551, Asp-553, Gln-554, and His-581. Positions 591-595 (KMSKS) match the 'KMSKS' region motif. Residue Lys-594 participates in ATP binding.

Belongs to the class-I aminoacyl-tRNA synthetase family. IleS type 2 subfamily. As to quaternary structure, monomer. It depends on Zn(2+) as a cofactor.

The protein resides in the cytoplasm. The enzyme catalyses tRNA(Ile) + L-isoleucine + ATP = L-isoleucyl-tRNA(Ile) + AMP + diphosphate. Catalyzes the attachment of isoleucine to tRNA(Ile). As IleRS can inadvertently accommodate and process structurally similar amino acids such as valine, to avoid such errors it has two additional distinct tRNA(Ile)-dependent editing activities. One activity is designated as 'pretransfer' editing and involves the hydrolysis of activated Val-AMP. The other activity is designated 'posttransfer' editing and involves deacylation of mischarged Val-tRNA(Ile). The polypeptide is Isoleucine--tRNA ligase (ileS) (Thermus thermophilus (strain ATCC 27634 / DSM 579 / HB8)).